We begin with the raw amino-acid sequence, 277 residues long: Large ribosomal subunit protein uL2 (277 aa).

Residues 222–277 (GVAMNPVDHPHGGGEGRTSGGRHPVSPWGKPTKGKRTRSNKATDKFIMRTRHQRKK) are disordered.

This sequence belongs to the universal ribosomal protein uL2 family. As to quaternary structure, part of the 50S ribosomal subunit. Forms a bridge to the 30S subunit in the 70S ribosome.

In terms of biological role, one of the primary rRNA binding proteins. Required for association of the 30S and 50S subunits to form the 70S ribosome, for tRNA binding and peptide bond formation. It has been suggested to have peptidyltransferase activity; this is somewhat controversial. Makes several contacts with the 16S rRNA in the 70S ribosome. The sequence is that of Large ribosomal subunit protein uL2 from Bartonella tribocorum (strain CIP 105476 / IBS 506).